A 429-amino-acid polypeptide reads, in one-letter code: Xaa-Pro dipeptidase (429 aa).

Mn(2+) is bound by residues Asp-241, Asp-252, His-334, Glu-372, and Glu-411.

This sequence belongs to the peptidase M24B family. Bacterial-type prolidase subfamily. Requires Mn(2+) as cofactor.

The catalysed reaction is Xaa-L-Pro dipeptide + H2O = an L-alpha-amino acid + L-proline. Functionally, splits dipeptides with a prolyl residue in the C-terminal position. In Marinobacter nauticus (strain ATCC 700491 / DSM 11845 / VT8) (Marinobacter aquaeolei), this protein is Xaa-Pro dipeptidase.